A 23-amino-acid chain; its full sequence is Aurein-4.3 (23 aa).

It belongs to the frog skin active peptide (FSAP) family. Aurein subfamily. As to expression, expressed by the skin dorsal glands.

It is found in the secreted. In terms of biological role, has no antimicrobial or anticancer activity. In Ranoidea aurea (Green and golden bell frog), this protein is Aurein-4.3.